Reading from the N-terminus, the 355-residue chain is Protein-tyrosine sulfotransferase 1 (355 aa).

At 1–8 (MIGKLKQN) the chain is on the cytoplasmic side. The helical; Signal-anchor for type II membrane protein transmembrane segment at 9–25 (LLVACLVISSVTVFYLC) threads the bilayer. Over 26–355 (RHAMDCHHRI…QKSPEKPNPS (330 aa)) the chain is Lumenal. Asn55 carries an N-linked (GlcNAc...) asparagine glycan. 3'-phosphoadenylyl sulfate is bound at residue 76 to 80 (RSGTT). Cys94 and Cys154 form a disulfide bridge. The active-site Proton donor/acceptor is Glu97. Positions 99–103 (RVIPR) are interaction with peptide substrate. Residues Arg181, Ser189, and Arg193 each coordinate 3'-phosphoadenylyl sulfate. A disulfide bridge connects residues Cys223 and Cys230. Residues Tyr235, 282–291 (STDQVIKPVN), and Lys297 each bind 3'-phosphoadenylyl sulfate. Residues 325-355 (HANPPNYGRPDPLVLDNTRRLQKSPEKPNPS) are disordered. Positions 341 to 355 (NTRRLQKSPEKPNPS) are enriched in basic and acidic residues.

Belongs to the protein sulfotransferase family.

It is found in the golgi apparatus membrane. The enzyme catalyses L-tyrosyl-[protein] + 3'-phosphoadenylyl sulfate = O-sulfo-L-tyrosine-[protein] + adenosine 3',5'-bisphosphate + H(+). Functionally, catalyzes the O-sulfation of tyrosine residues within acidic motifs of polypeptides, using 3'-phosphoadenylyl sulfate (PAPS) as cosubstrate. This chain is Protein-tyrosine sulfotransferase 1 (tpst1), found in Danio rerio (Zebrafish).